Reading from the N-terminus, the 1058-residue chain is Vacuolar protein sorting-associated protein 54 (1058 aa).

Residues 369–389 are a coiled coil; the sequence is SKKIVEVHERYEQKKKLLAKL.

This sequence belongs to the VPS54 family. Component of the Golgi-associated retrograde protein (GARP) complex, also called VFT (VPS fifty-three) complex, composed of vps-51, vps-52, vps-53 and vps-54. Within the complex interacts with vps-52 and vps-53.

It is found in the golgi apparatus. Its subcellular location is the trans-Golgi network. Acts as a component of the GARP complex that is involved in retrograde transport from early and late endosomes to the trans-Golgi network (TGN). The GARP complex facilitates tethering as well as SNARE complex assembly at the Golgi. This is Vacuolar protein sorting-associated protein 54 from Caenorhabditis elegans.